A 379-amino-acid chain; its full sequence is Copper-containing nitrite reductase (379 aa).

A signal peptide (tat-type signal) is located at residues 1 to 32; sequence MSEQFRLTRRSMLAGAAVAGALAPVVTSVAHA. Plastocyanin-like domains lie at 33–214 and 215–379; these read EGGG…YDKV and YYVG…PTSG. Residues histidine 134, histidine 139, histidine 174, cysteine 175, histidine 184, methionine 189, and histidine 345 each contribute to the Cu cation site.

It belongs to the multicopper oxidase family. In terms of assembly, homotrimer. Cu(2+) is required as a cofactor. Cu(+) serves as cofactor. The cofactor is FAD. Post-translationally, predicted to be exported by the Tat system. The position of the signal peptide cleavage has not been experimentally proven.

It localises to the periplasm. It catalyses the reaction nitric oxide + Fe(III)-[cytochrome c] + H2O = Fe(II)-[cytochrome c] + nitrite + 2 H(+). It participates in nitrogen metabolism; nitrate reduction (denitrification); dinitrogen from nitrate: step 2/4. This chain is Copper-containing nitrite reductase (nirU), found in Neorhizobium galegae (Rhizobium galegae).